Here is a 973-residue protein sequence, read N- to C-terminus: E3 ubiquitin-protein ligase MIB2 (973 aa).

In terms of domain architecture, MIB/HERC2 1 spans 1–80; the sequence is MDLDPHAGVQ…AHDLLLYDNA (80 aa). Residues 86 to 138 form a ZZ-type zinc finger; that stretch reads HPNIICDCCKKHGLRGMRWKCRVCFDYDLCTQCYMHNKHDLTHAFERYETSHS. Zn(2+) is bound by residues Cys91, Cys94, Cys106, Cys109, Cys115, Cys118, His124, and His128. The 79-residue stretch at 149–227 folds into the MIB/HERC2 2 domain; sequence LPRIPLRGIF…KVDLRCVGEA (79 aa). At Ser251 the chain carries Phosphoserine. ANK repeat units lie at residues 480-509, 513-542, 546-575, 579-611, 615-644, 649-679, 683-712, 716-744, and 785-814; these read QGRT…SMDL, EGNT…AVDA, TRST…DVNL, HADT…DVTA, QGFT…QLVD, DGFT…DVNV, KLQS…SVNT, EGDT…DPGP, and RGRS…ERQA. 2 RING-type zinc fingers span residues 850-885 and 929-962; these read CLVC…IRCQ and CPIC…PICR.

Interacts with actin monomer. Post-translationally, ubiquitinated. Possibly via autoubiquitination. Highly expressed in brain, heart, liver and kidney.

Its subcellular location is the cytoplasm. It is found in the endosome. The catalysed reaction is S-ubiquitinyl-[E2 ubiquitin-conjugating enzyme]-L-cysteine + [acceptor protein]-L-lysine = [E2 ubiquitin-conjugating enzyme]-L-cysteine + N(6)-ubiquitinyl-[acceptor protein]-L-lysine.. It participates in protein modification; protein ubiquitination. Its function is as follows. E3 ubiquitin-protein ligase that mediates ubiquitination of Delta receptors, which act as ligands of Notch proteins. Positively regulates the Delta-mediated Notch signaling by ubiquitinating the intracellular domain of Delta, leading to endocytosis of Delta receptors. The chain is E3 ubiquitin-protein ligase MIB2 (Mib2) from Mus musculus (Mouse).